The following is an 804-amino-acid chain: Ral guanine nucleotide dissociation stimulator-like 1 (804 aa).

The N-terminal Ras-GEF domain maps to 101–231; the sequence is KIRSIRAGTL…RAQSLLEQLR (131 aa). The Ras-GEF domain occupies 270–539; sequence EVDLVAEQLT…YVLSCEVEGL (270 aa). Disordered regions lie at residues 564-611 and 640-676; these read NDST…TPTH and SASI…GFPP. Low complexity-rich tracts occupy residues 581–607 and 640–649; these read PTGS…SDGM and SASISLASPT. Positions 661 to 671 are enriched in polar residues; sequence ISLTPLMSPTS. The region spanning 684–771 is the Ras-associating domain; that stretch reads DACIIRVSLE…FDFLLRLRGS (88 aa).

In terms of biological role, probable guanine nucleotide exchange factor. The sequence is that of Ral guanine nucleotide dissociation stimulator-like 1 (rgl1) from Danio rerio (Zebrafish).